The sequence spans 197 residues: Probable GTP-binding protein EngB (197 aa).

The region spanning 22–197 (TGVEVAFAGR…FKEKLDTWYQ (176 aa)) is the EngB-type G domain. GTP is bound by residues 30–37 (GRSNAGKS), 57–61 (GRTQL), 75–78 (DLPG), 142–145 (TKAD), and 177–179 (FSS). Mg(2+)-binding residues include serine 37 and threonine 59.

Belongs to the TRAFAC class TrmE-Era-EngA-EngB-Septin-like GTPase superfamily. EngB GTPase family. Mg(2+) is required as a cofactor.

Its function is as follows. Necessary for normal cell division and for the maintenance of normal septation. This chain is Probable GTP-binding protein EngB, found in Francisella tularensis subsp. holarctica (strain FTNF002-00 / FTA).